Reading from the N-terminus, the 213-residue chain is Riboflavin synthase (213 aa).

Lumazine-binding repeat units lie at residues 1–97 (MFTG…IGGH) and 98–195 (LMSG…VDTV). Residues 4-6 (GIV), 48-50 (CLT), 62-67 (DLMKET), 101-103 (GHI), Lys-137, 146-148 (SLT), and 160-165 (HLIPET) contribute to the 2,4-dihydroxypteridine site.

Homotrimer. Unlike in B.subtilis, does not interact with 6,7-dimethyl-8-ribityllumazine synthase.

It carries out the reaction 2 6,7-dimethyl-8-(1-D-ribityl)lumazine + H(+) = 5-amino-6-(D-ribitylamino)uracil + riboflavin. It participates in cofactor biosynthesis; riboflavin biosynthesis; riboflavin from 2-hydroxy-3-oxobutyl phosphate and 5-amino-6-(D-ribitylamino)uracil: step 2/2. In terms of biological role, catalyzes the dismutation of two molecules of 6,7-dimethyl-8-ribityllumazine, resulting in the formation of riboflavin and 5-amino-6-(D-ribitylamino)uracil. The chain is Riboflavin synthase (ribC) from Escherichia coli (strain K12).